Here is a 2339-residue protein sequence, read N- to C-terminus: Voltage-dependent N-type calcium channel subunit alpha-1B (2339 aa).

The segment at 1-37 is disordered; the sequence is MVRFGDELGGRYGGPGGGERARGGGAGGAGGPGPGGL. Topologically, residues 1–90 are cytoplasmic; it reads MVRFGDELGG…DNVVRKYAKR (90 aa). A compositionally biased stretch (gly residues) spans 10–37; sequence GRYGGPGGGERARGGGAGGAGGPGPGGL. The residue at position 22 (Arg22) is an Omega-N-methylarginine. The stretch at 82–359 is one I repeat; it reads NVVRKYAKRI…LVLGVLSGEF (278 aa). The chain crosses the membrane as a helical span at residues 91-114; it reads ITEWPPFEYMILATIIANCIVLAL. At 115 to 131 the chain is on the extracellular side; it reads EQHLPDGDKTPMSERLD. Residues 132-152 traverse the membrane as a helical segment; sequence DTEPYFIGIFCFEAGIKIIAL. The Cytoplasmic segment spans residues 153-163; that stretch reads GFVFHKGSYLR. The helical transmembrane segment at 164 to 182 threads the bilayer; that stretch reads NGWNVMDFVVVLTGILATA. At 183-187 the chain is on the extracellular side; that stretch reads GTDFD. Residues 188-211 form a helical membrane-spanning segment; sequence LRTLRAVRVLRPLKLVSGIPSLQV. Over 212–221 the chain is Cytoplasmic; the sequence is VLKSIMKAMV. A helical membrane pass occupies residues 222-244; that stretch reads PLLQIGLLLFFAILMFAIIGLEF. At 245-331 the chain is on the extracellular side; the sequence is YMGKFHKACF…NTNDAAGNTW (87 aa). Asn256 is a glycosylation site (N-linked (GlcNAc...) asparagine). A helical membrane pass occupies residues 332–356; the sequence is NWLYFIPLIIIGSFFMLNLVLGVLS. Over 357–482 the chain is Cytoplasmic; it reads GEFAKERERV…FFIRRMVKAQ (126 aa). A binding to the beta subunit region spans residues 379-396; the sequence is QQIERELNGYLEWIFKAE. A Phosphoserine modification is found at Ser411. 451 to 458 provides a ligand contact to ATP; it reads ASLKSGKT. Residues 468-712 form an II repeat; that stretch reads EKMFRFFIRR…VFLAIAVDNL (245 aa). Residues 483-501 form a helical membrane-spanning segment; the sequence is SFYWVVLCVVALNTLCVAM. The Extracellular segment spans residues 502-511; the sequence is VHYNQPRRLT. Residues 512–534 form a helical membrane-spanning segment; the sequence is TTLYFAEFVFLGLFLTEMSLKMY. Over 535–544 the chain is Cytoplasmic; that stretch reads GLGPRSYFRS. Ser544 provides a ligand contact to a 1,2-diacyl-sn-glycero-3-phospho-(1D-myo-inositol-4,5-bisphosphate). The helical transmembrane segment at 545–566 threads the bilayer; the sequence is SFNCFDFGVIVGSVFEVVWAAI. Topologically, residues 567–573 are extracellular; sequence KPGSSFG. The helical transmembrane segment at 574–586 threads the bilayer; sequence ISVLRALRLLRIF. A 1,2-diacyl-sn-glycero-3-phospho-(1D-myo-inositol-4,5-bisphosphate) is bound by residues Arg584 and Lys587. At 587–604 the chain is on the cytoplasmic side; that stretch reads KVTKYWSSLRNLVVSLLN. Residues 605 to 630 traverse the membrane as a helical segment; sequence SMKSIISLLFLLFLFIVVFALLGMQL. Residues 631–682 lie on the Extracellular side of the membrane; it reads FGGQFNFQDETPTTNFDTFPAAILTVFQILTGEDWNAVMYHGIESQGGVSKG. The chain crosses the membrane as a helical span at residues 683-709; it reads MFSSFYFIVLTLFGNYTLLNVFLAIAV. At 710 to 1151 the chain is on the cytoplasmic side; the sequence is DNLANAQELT…FCHYIVTMRY (442 aa). Phosphoserine occurs at positions 745, 748, and 783. Basic and acidic residues-rich tracts occupy residues 816-826, 857-886, 922-932, and 965-976; these read PLVVELGRDGA, KDKTPAAGDQDRAEAPKAESGEPGAREERP, GSPEEAAEREP, and GPREAESGEEPA. 2 disordered regions span residues 816–1038 and 1054–1076; these read PLVV…VTVG and QPEDADNQRNVTRMGSQPPDPNT. Residues 977–986 are compositionally biased toward basic residues; it reads RRHRARHKAQ. Residues 990-1029 are compositionally biased toward basic and acidic residues; it reads EAVEKETTEKEATEKEAEIVEADKEKELRNHQPREPHCDL. Ser1069 bears the Phosphoserine mark. The III repeat unit spans residues 1137–1419; it reads NLLRRFCHYI…IFVALIIITF (283 aa). Residues 1152–1170 form a helical membrane-spanning segment; the sequence is FEVVILVVIALSSIALAAE. Topologically, residues 1171-1178 are extracellular; that stretch reads DPVRTDSP. Residues 1179 to 1203 traverse the membrane as a helical segment; that stretch reads RNNALKYLDYIFTGVFTFEMVIKMI. The Cytoplasmic portion of the chain corresponds to 1204 to 1217; it reads DLGLLLHPGAYFRD. The chain crosses the membrane as a helical span at residues 1218–1238; it reads LWNILDFIVVSGALVAFAFSG. The Extracellular portion of the chain corresponds to 1239-1244; that stretch reads SKGKDI. Residues 1245-1265 traverse the membrane as a helical segment; sequence NTIKSLRVLRVLRPLKTIKRL. Residues 1266–1283 are Cytoplasmic-facing; the sequence is PKLKAVFDCVVNSLKNVL. A helical membrane pass occupies residues 1284 to 1303; that stretch reads NILIVYMLFMFIFAVIAVQL. Topologically, residues 1304–1390 are extracellular; the sequence is FKGKFFYCTD…EQGPSPGYRM (87 aa). A helical transmembrane segment spans residues 1391 to 1416; it reads ELSIFYVVYFVVFPFFFVNIFVALII. The Cytoplasmic portion of the chain corresponds to 1417–1471; it reads ITFQEQGDKVMSECSLEKNERACIDFAISAKPLTRYMPQNRQSFQYKTWTFVVSP. The stretch at 1456–1711 is one IV repeat; the sequence is NRQSFQYKTW…LFVAVIMDNF (256 aa). The chain crosses the membrane as a helical span at residues 1472–1490; it reads PFEYFIMAMIALNTVVLMM. At 1491–1498 the chain is on the extracellular side; sequence KFYDAPYE. A helical transmembrane segment spans residues 1499 to 1523; the sequence is YELMLKCLNIVFTSMFSMECVLKII. The Cytoplasmic portion of the chain corresponds to 1524 to 1533; sequence AFGVLNYFRD. A helical transmembrane segment spans residues 1534–1555; sequence AWNVFDFVTVLGSITDILVTEI. Topologically, residues 1556–1563 are extracellular; sequence AETNNFIN. Residue Asn1563 is glycosylated (N-linked (GlcNAc...) asparagine). A helical transmembrane segment spans residues 1564–1582; that stretch reads LSFLRLFRAARLIKLLRQG. The Cytoplasmic portion of the chain corresponds to 1583-1601; the sequence is YTIRILLWTFVQSFKALPY. A helical transmembrane segment spans residues 1602 to 1621; that stretch reads VCLLIAMLFFIYAIIGMQVF. Residues 1622-1683 lie on the Extracellular side of the membrane; sequence GNIALDDDTS…ANATECGSDF (62 aa). Asn1675 carries N-linked (GlcNAc...) asparagine glycosylation. The chain crosses the membrane as a helical span at residues 1684-1707; it reads AYFYFVSFIFLCSFLMLNLFVAVI. Topologically, residues 1708–2339 are cytoplasmic; the sequence is MDNFEYLTRD…YHHPDQDHWC (632 aa). An EF-hand domain is found at 1724–1759; the sequence is HHLDEFIRVWAEYDPAACGRISYNDMFEMLKHMSPP. Ca(2+) is bound by residues Asp1737, Arg1743, and Asp1748. Polar residues predominate over residues 1916–1931; the sequence is SSTSLSNGGAIQNQES. Disordered stretches follow at residues 1916–1968 and 1981–2206; these read SSTS…VGRS and TRRG…YKTA. A compositionally biased stretch (basic and acidic residues) spans 1946–1960; it reads DAPHEARPPLERGHS. Residues 2049-2063 are compositionally biased toward basic residues; it reads SHHHHHRCHRRRDRK. Ser2066 is modified (phosphoserine). Positions 2098-2116 are enriched in basic and acidic residues; that stretch reads CRRERERRQERGRSQERRQ. Over residues 2143–2153 the composition is skewed to low complexity; the sequence is PSLSSHPTSPT. A compositionally biased stretch (polar residues) spans 2164-2180; sequence GSGSVNGSPLLSTSGAS. Phosphoserine occurs at positions 2224, 2233, and 2256.

Belongs to the calcium channel alpha-1 subunit (TC 1.A.1.11) family. CACNA1B subfamily. As to quaternary structure, multisubunit complex consisting of alpha-1, alpha-2, beta and delta subunits in a 1:1:1:1 ratio. The channel activity is directed by the pore-forming and voltage-sensitive alpha-1 subunit. In many cases, this subunit is sufficient to generate voltage-sensitive calcium channel activity. The auxiliary subunits beta and alpha-2/delta linked by a disulfide bridge regulate the channel activity. Interacts with RIMS1. Interacts with FMR1 (via C-terminus); this interaction induces a decrease in the number of presynaptic functional CACNA1B channels at the cell surface. In terms of processing, phosphorylated in vitro by CaM-kinase II, PKA, PKC and CGPK. As to expression, isoform Alpha-1b-1 and isoform Alpha-1b-2 are expressed in the central nervous system, but not in skeletal muscle or aorta. Expressed in the cerebral white matter, cortex, hippocampus, basal ganglia, and cerebellum.

The protein localises to the membrane. It catalyses the reaction Ca(2+)(in) = Ca(2+)(out). Its activity is regulated as follows. Is specifically blocked by omega-conotoxin GVIA. Is specifically blocked by omega-conotoxin MVIIA (ziconotide). Is insensitive to dihydropyridines (DHP). Is specifically blocked by omega-conotoxin MVIIA (ziconotide). Is insensitive to dihydropyridines (DHP). Its function is as follows. Voltage-sensitive calcium channels (VSCC) mediate the entry of calcium ions into excitable cells and are also involved in a variety of calcium-dependent processes, including muscle contraction, hormone or neurotransmitter release, gene expression, cell motility, cell division and cell death. This alpha-1B subunit gives rise to N-type calcium currents. N-type calcium channels belong to the 'high-voltage activated' (HVA) group. They are involved in pain signaling. Calcium channels containing alpha-1B subunit may play a role in directed migration of immature neurons. Mediates Ca(2+) release probability at hippocampal neuronal soma and synaptic terminals. In terms of biological role, voltage-sensitive calcium channels (VSCC) mediate the entry of calcium ions into excitable cells and are also involved in a variety of calcium-dependent processes, including muscle contraction, hormone or neurotransmitter release, gene expression, cell motility, cell division and cell death. This alpha-1B subunit gives rise to N-type calcium currents. The protein is Voltage-dependent N-type calcium channel subunit alpha-1B (CACNA1B) of Homo sapiens (Human).